A 434-amino-acid polypeptide reads, in one-letter code: CinA-like protein (434 aa).

Belongs to the CinA family.

In Mycobacterium avium (strain 104), this protein is CinA-like protein.